A 66-amino-acid polypeptide reads, in one-letter code: Jindongenin-1a (66 aa).

Positions 1–22 (MFTLKKPLLLLFFLGTVSLSLC) are cleaved as a signal peptide. Residues 23-40 (EQERAADDDEGEVIEEEV) constitute a propeptide that is removed on maturation. C60 and C66 are disulfide-bonded.

Expressed by the skin glands.

The protein resides in the secreted. Functionally, displays broad-spectrum antibacterial activity against a range of Gram-positive and Gram-negative bacteria. Also displays antifungal activity against C.albicans ATCC 2002. Has low hemolytic activity, low cytotoxicity and low antioxidant activity. The polypeptide is Jindongenin-1a (Amolops jingdongensis (Chinese torrent frog)).